Here is a 172-residue protein sequence, read N- to C-terminus: Adenine phosphoribosyltransferase (172 aa).

Belongs to the purine/pyrimidine phosphoribosyltransferase family. As to quaternary structure, homodimer.

It localises to the cytoplasm. The enzyme catalyses AMP + diphosphate = 5-phospho-alpha-D-ribose 1-diphosphate + adenine. It participates in purine metabolism; AMP biosynthesis via salvage pathway; AMP from adenine: step 1/1. Its function is as follows. Catalyzes a salvage reaction resulting in the formation of AMP, that is energically less costly than de novo synthesis. This is Adenine phosphoribosyltransferase from Methanococcus maripaludis (strain C7 / ATCC BAA-1331).